Reading from the N-terminus, the 290-residue chain is Cell division protein ZipA (290 aa).

Position 1 (Met1) is a topological domain, periplasmic. Residues 2 to 22 (DIGLREWLIVIGLIVIAGILF) traverse the membrane as a helical segment. Topologically, residues 23-290 (DGWRRMRGGK…HERRSLMQKR (268 aa)) are cytoplasmic. The disordered stretch occupies residues 66 to 143 (REPSFDEQDL…REKAPSVAAA (78 aa)). Basic and acidic residues predominate over residues 81-99 (REGKERKGGKRQDEPRQGD). Positions 100–114 (LDLDEGMALEADPSD) are enriched in acidic residues.

This sequence belongs to the ZipA family. In terms of assembly, interacts with FtsZ via their C-terminal domains.

The protein localises to the cell inner membrane. Its function is as follows. Essential cell division protein that stabilizes the FtsZ protofilaments by cross-linking them and that serves as a cytoplasmic membrane anchor for the Z ring. Also required for the recruitment to the septal ring of downstream cell division proteins. The protein is Cell division protein ZipA of Pseudomonas paraeruginosa (strain DSM 24068 / PA7) (Pseudomonas aeruginosa (strain PA7)).